We begin with the raw amino-acid sequence, 147 residues long: uncharacterized protein (147 aa).

The HTH LytTR-type domain occupies 44–147 (LVGYIDKEIH…LKSIKERLSI (104 aa)).

It localises to the cytoplasm. This is an uncharacterized protein from Staphylococcus aureus (strain Mu50 / ATCC 700699).